Here is a 435-residue protein sequence, read N- to C-terminus: Eukaryotic translation initiation factor 3 subunit E (435 aa).

One can recognise a PCI domain in the interval 219-392; that stretch reads FFNHAKGRDL…GHVVMGTQPL (174 aa).

This sequence belongs to the eIF-3 subunit E family. Component of the eukaryotic translation initiation factor 3 (eIF-3) complex.

It localises to the cytoplasm. In terms of biological role, component of the eukaryotic translation initiation factor 3 (eIF-3) complex, which is involved in protein synthesis of a specialized repertoire of mRNAs and, together with other initiation factors, stimulates binding of mRNA and methionyl-tRNAi to the 40S ribosome. The eIF-3 complex specifically targets and initiates translation of a subset of mRNAs involved in cell proliferation. The protein is Eukaryotic translation initiation factor 3 subunit E (eIF3-S6) of Culex quinquefasciatus (Southern house mosquito).